The primary structure comprises 106 residues: Stress-responsive protein 1 (106 aa).

The protein localises to the mitochondrion. Its function is as follows. Stress-responsive protein that may play a role in regulation of cell cycle. The sequence is that of Stress-responsive protein 1 (sro1) from Schizosaccharomyces pombe (strain 972 / ATCC 24843) (Fission yeast).